Here is a 283-residue protein sequence, read N- to C-terminus: Protein boule-like (283 aa).

Residues M1–P25 form a disordered region. The region spanning N33–R110 is the RRM domain. The 25-residue stretch at P160 to Q184 folds into the DAZ domain.

Belongs to the RRM DAZ family. As to quaternary structure, interacts with DAZ1 and DAZL.

The protein localises to the cytoplasm. Functionally, probable RNA-binding protein, which may be required during spermatogenesis. May act by binding to the 3'-UTR of mRNAs and regulating their translation. This chain is Protein boule-like (BOLL), found in Macaca fascicularis (Crab-eating macaque).